We begin with the raw amino-acid sequence, 215 residues long: Glutathione S-transferase F9 (215 aa).

Positions 2-81 constitute a GST N-terminal domain; that stretch reads VLKVYGPHFA…YVAEKYRSQG (80 aa). Position 11 to 12 (11 to 12) interacts with glutathione; it reads AS. Phosphoserine is present on serine 12. The residue at position 35 (methionine 35) is a Methionine sulfoxide. Glutathione contacts are provided by residues 39 to 40, 52 to 53, and 65 to 66; these read HK, TV, and ES. The GST C-terminal domain occupies 88–215; sequence TVEDRGQVEQ…ETVAKYSFPA (128 aa). Residues methionine 118, methionine 123, and methionine 184 each carry the methionine sulfoxide modification.

This sequence belongs to the GST superfamily. Phi family. Oxidated at Met-35, Met-118, Met-123 and Met-184 in oxidative stress conditions (e.g. hydrogen peroxide H(2)O(2)).

It localises to the cytoplasm. It is found in the cytosol. The catalysed reaction is RX + glutathione = an S-substituted glutathione + a halide anion + H(+). With respect to regulation, redox-regulated enzyme; in oxidative stress conditions methionine oxidation ensure a thermodynamic and structural compensatory mechanism to guarantee H(2)O(2) peroxidase activity despite transferase activity inhibition. Its function is as follows. In vitro, possesses glutathione S-transferase activity toward 1-chloro-2,4-dinitrobenzene (CDNB) and benzyl isothiocyanate (BITC), and glutathione peroxidase activity toward cumene hydroperoxide and linoleic acid-13-hydroperoxide. May be involved in the conjugation of reduced glutathione to a wide number of exogenous and endogenous hydrophobic electrophiles and have a detoxification role against certain herbicides. The sequence is that of Glutathione S-transferase F9 from Arabidopsis thaliana (Mouse-ear cress).